Reading from the N-terminus, the 33-residue chain is Mu-theraphotoxin-Osp1a (33 aa).

3 cysteine pairs are disulfide-bonded: Cys-2–Cys-17, Cys-9–Cys-22, and Cys-16–Cys-29.

The protein belongs to the neurotoxin 10 (Hwtx-1) family. As to expression, expressed by the venom gland.

It is found in the secreted. Functionally, voltage-gated sodium channel Nav1.7/SCN9A inhibitor. The protein is Mu-theraphotoxin-Osp1a of Orphnaecus sp. (strain Sibaliw/Philippines) (Tarantula spider).